The primary structure comprises 858 residues: Bifunctional uridylyltransferase/uridylyl-removing enzyme (858 aa).

Positions 1 to 324 (MSASVAEPPP…PATSGVTRVL (324 aa)) are uridylyltransferase. The uridylyl-removing stretch occupies residues 325-681 (SPGRFVEKQG…ARPSPVGDAL (357 aa)). The region spanning 443-565 (VDQHILMVLR…VGSERRLTAL (123 aa)) is the HD domain. ACT domains follow at residues 682-761 (QVLV…PEPS) and 790-858 (ILSV…AIAV).

The protein belongs to the GlnD family. Requires Mg(2+) as cofactor.

It carries out the reaction [protein-PII]-L-tyrosine + UTP = [protein-PII]-uridylyl-L-tyrosine + diphosphate. The enzyme catalyses [protein-PII]-uridylyl-L-tyrosine + H2O = [protein-PII]-L-tyrosine + UMP + H(+). With respect to regulation, uridylyltransferase (UTase) activity is inhibited by glutamine, while glutamine activates uridylyl-removing (UR) activity. Functionally, modifies, by uridylylation and deuridylylation, the PII regulatory proteins (GlnB and homologs), in response to the nitrogen status of the cell that GlnD senses through the glutamine level. Under low glutamine levels, catalyzes the conversion of the PII proteins and UTP to PII-UMP and PPi, while under higher glutamine levels, GlnD hydrolyzes PII-UMP to PII and UMP (deuridylylation). Thus, controls uridylylation state and activity of the PII proteins, and plays an important role in the regulation of nitrogen assimilation and metabolism. In Burkholderia mallei (strain ATCC 23344), this protein is Bifunctional uridylyltransferase/uridylyl-removing enzyme.